Consider the following 225-residue polypeptide: Probable proteasome subunit beta type-6 (225 aa).

Belongs to the peptidase T1B family. As to quaternary structure, the 26S proteasome consists of a 20S proteasome core and two 19S regulatory subunits. The 20S proteasome core is composed of 28 subunits that are arranged in four stacked rings, resulting in a barrel-shaped structure. The two end rings are each formed by seven alpha subunits, and the two central rings are each formed by seven beta subunits. The catalytic chamber with the active sites is on the inside of the barrel.

It is found in the cytoplasm. The protein localises to the nucleus. Its function is as follows. Non-catalytic component of the proteasome, a multicatalytic proteinase complex which is characterized by its ability to cleave peptides with Arg, Phe, Tyr, Leu, and Glu adjacent to the leaving group at neutral or slightly basic pH. The proteasome has an ATP-dependent proteolytic activity. The sequence is that of Probable proteasome subunit beta type-6 (pam1) from Schizosaccharomyces pombe (strain 972 / ATCC 24843) (Fission yeast).